We begin with the raw amino-acid sequence, 478 residues long: Sugar transporter ERD6-like 18 (478 aa).

The next 12 helical transmembrane spans lie at 31 to 51 (ITACVILSTFIAVCGSFSFGV), 71 to 91 (IAQFSAFASLSTLGAAIGALF), 110 to 130 (LLCIIGWFSIAFAKDVMWLNF), 133 to 153 (ISSGIGLGLISYVVPVYIAEI), 162 to 180 (FTFTNQLLQNSGLAMVYFS), 188 to 208 (ILALLGALPCFIQVIGLFFVP), 270 to 290 (TLVVGIGLMLIQQFSGSSAVL), 306 to 326 (IGSTLLGLFMIPKAMIGVILV), 333 to 353 (PLLLTSVSGMCITSMLIGVAF), 367 to 387 (VFTFICVTLYIGTYAIGLGGL), 407 to 427 (IVTLVSWSSSSIVTYAFNFLL), and 433 to 453 (GTFYVFGAVGGLALLFIWLLV).

Belongs to the major facilitator superfamily. Sugar transporter (TC 2.A.1.1) family. In terms of tissue distribution, expressed in leaf vasculature, stem and flowers.

It localises to the membrane. In terms of biological role, sugar transporter. The chain is Sugar transporter ERD6-like 18 (SFP2) from Arabidopsis thaliana (Mouse-ear cress).